Consider the following 113-residue polypeptide: Defense protein 2 (113 aa).

This sequence belongs to the attacin/sarcotoxin-2 family.

Its subcellular location is the secreted. Has antibacterial activity against both Gram-positive and Gram-negative bacteria. The chain is Defense protein 2 from Lonomia obliqua (Moth).